The following is a 557-amino-acid chain: Potassium-transporting ATPase potassium-binding subunit (557 aa).

12 helical membrane passes run 5 to 25 (GFLL…PLGS), 63 to 83 (LCAI…MLLG), 132 to 152 (GLTV…FAFI), 170 to 190 (LLRI…LFFI), 253 to 273 (FVQM…FGEV), 283 to 303 (LLWA…WAEV), 329 to 349 (VLVS…AVIA), 356 to 376 (ALGG…FGGV), 379 to 399 (GLYG…LMIG), 416 to 436 (LTAL…ALAM), 484 to 504 (LLAF…MAIA), and 526 to 546 (LFVG…FIPA).

This sequence belongs to the KdpA family. As to quaternary structure, the system is composed of three essential subunits: KdpA, KdpB and KdpC.

The protein resides in the cell inner membrane. Functionally, part of the high-affinity ATP-driven potassium transport (or Kdp) system, which catalyzes the hydrolysis of ATP coupled with the electrogenic transport of potassium into the cytoplasm. This subunit binds the periplasmic potassium ions and delivers the ions to the membrane domain of KdpB through an intramembrane tunnel. The chain is Potassium-transporting ATPase potassium-binding subunit from Shigella flexneri.